The sequence spans 344 residues: Ferrochelatase (344 aa).

Fe cation-binding residues include histidine 196 and glutamate 277.

The protein belongs to the ferrochelatase family.

The protein localises to the cytoplasm. It catalyses the reaction heme b + 2 H(+) = protoporphyrin IX + Fe(2+). It participates in porphyrin-containing compound metabolism; protoheme biosynthesis; protoheme from protoporphyrin-IX: step 1/1. In terms of biological role, catalyzes the ferrous insertion into protoporphyrin IX. This is Ferrochelatase from Synechococcus sp. (strain JA-2-3B'a(2-13)) (Cyanobacteria bacterium Yellowstone B-Prime).